The primary structure comprises 343 residues: N-acetyl-gamma-glutamyl-phosphate reductase (343 aa).

Residue cysteine 146 is part of the active site.

It belongs to the NAGSA dehydrogenase family. Type 1 subfamily.

It localises to the cytoplasm. It carries out the reaction N-acetyl-L-glutamate 5-semialdehyde + phosphate + NADP(+) = N-acetyl-L-glutamyl 5-phosphate + NADPH + H(+). The protein operates within amino-acid biosynthesis; L-arginine biosynthesis; N(2)-acetyl-L-ornithine from L-glutamate: step 3/4. Functionally, catalyzes the NADPH-dependent reduction of N-acetyl-5-glutamyl phosphate to yield N-acetyl-L-glutamate 5-semialdehyde. The chain is N-acetyl-gamma-glutamyl-phosphate reductase from Arthrobacter sp. (strain FB24).